The primary structure comprises 462 residues: Hemopexin (462 aa).

Residues 1–23 form the signal peptide; it reads MARVLGAPVALGLWSLCWSLAIA. 2 O-linked (GalNAc...) threonine glycosylation sites follow: threonine 24 and threonine 29. Positions 29 to 48 are disordered; the sequence is TSAHGNVAEGETKPDPDVTE. An O-glycosylated at one site region spans residues 30–40; that stretch reads SAHGNVAEGET. Residues 38–48 show a composition bias toward basic and acidic residues; the sequence is GETKPDPDVTE. Disulfide bonds link cysteine 50–cysteine 231, cysteine 149–cysteine 154, and cysteine 188–cysteine 200. 4 Hemopexin repeats span residues 53 to 93, 94 to 139, 140 to 184, and 185 to 231; these read GWSF…WKNF, PSPV…FPGI, PSPL…SWPA, and VGNC…FMPC. Asparagine 64 carries an N-linked (GlcNAc...) (complex) asparagine glycan. Histidine 79 contacts heme. A heme-binding site is contributed by histidine 150. Residue asparagine 187 is glycosylated (N-linked (GlcNAc...) (complex) asparagine). Histidine 236 is a heme binding site. Residues asparagine 240 and asparagine 246 are each glycosylated (N-linked (GlcNAc...) asparagine). Cystine bridges form between cysteine 257–cysteine 460, cysteine 366–cysteine 408, and cysteine 418–cysteine 435. Hemopexin repeat units lie at residues 259-304, 305-352, 357-396, and 400-450; these read PHLV…WPQG, PSAV…VGTP, LDSV…WTEL, and HEKV…ALPQ. Histidine 293 is a heme binding site. An N-linked (GlcNAc...) (complex) asparagine glycan is attached at asparagine 453.

The protein belongs to the hemopexin family. Interacts with FLVCR1. As to quaternary structure, (Microbial infection) Interacts with hepatitis E virus/HEV protein ORF3. Post-translationally, N- and O-glycosylated. O-glycosylated with core 1 or possibly core 8 glycans. O-glycosylation in the 30-40 region is minor compared to glycosylation at Thr-24 and Thr-29. Expressed by the liver and secreted in plasma.

Its subcellular location is the secreted. Binds heme and transports it to the liver for breakdown and iron recovery, after which the free hemopexin returns to the circulation. The sequence is that of Hemopexin (HPX) from Homo sapiens (Human).